The primary structure comprises 278 residues: uncharacterized protein (278 aa).

Residues M1–V34 lie on the Cytoplasmic side of the membrane. The helical transmembrane segment at L35–F55 threads the bilayer. The Extracellular portion of the chain corresponds to K56–T129. A helical transmembrane segment spans residues L130–Y150. The Cytoplasmic segment spans residues M151–R180. The helical transmembrane segment at K181–T201 threads the bilayer. Over I202–K205 the chain is Extracellular. Residues T206 to L222 form a helical membrane-spanning segment. The Cytoplasmic segment spans residues R223 to A278.

The protein resides in the cell membrane. This is an uncharacterized protein from Saccharomyces cerevisiae (strain ATCC 204508 / S288c) (Baker's yeast).